The chain runs to 334 residues: Transposase for insertion sequence element IS1328 (334 aa).

The protein belongs to the transposase IS1111A/IS1328/IS1533 family.

Its function is as follows. Required for the transposition of the insertion element. The protein is Transposase for insertion sequence element IS1328 of Yersinia enterocolitica.